A 160-amino-acid polypeptide reads, in one-letter code: 6,7-dimethyl-8-ribityllumazine synthase (160 aa).

5-amino-6-(D-ribitylamino)uracil is bound by residues Phe22, 57 to 59 (TYE), and 81 to 83 (TII). Position 86 to 87 (86 to 87 (QT)) interacts with (2S)-2-hydroxy-3-oxobutyl phosphate. Catalysis depends on His89, which acts as the Proton donor. Position 114 (Leu114) interacts with 5-amino-6-(D-ribitylamino)uracil. Arg128 contributes to the (2S)-2-hydroxy-3-oxobutyl phosphate binding site.

This sequence belongs to the DMRL synthase family. In terms of assembly, forms an icosahedral capsid composed of 60 subunits, arranged as a dodecamer of pentamers.

It carries out the reaction (2S)-2-hydroxy-3-oxobutyl phosphate + 5-amino-6-(D-ribitylamino)uracil = 6,7-dimethyl-8-(1-D-ribityl)lumazine + phosphate + 2 H2O + H(+). The protein operates within cofactor biosynthesis; riboflavin biosynthesis; riboflavin from 2-hydroxy-3-oxobutyl phosphate and 5-amino-6-(D-ribitylamino)uracil: step 1/2. In terms of biological role, catalyzes the formation of 6,7-dimethyl-8-ribityllumazine by condensation of 5-amino-6-(D-ribitylamino)uracil with 3,4-dihydroxy-2-butanone 4-phosphate. This is the penultimate step in the biosynthesis of riboflavin. The chain is 6,7-dimethyl-8-ribityllumazine synthase from Buchnera aphidicola subsp. Acyrthosiphon pisum (strain Tuc7).